The chain runs to 176 residues: MSKVRKNEEALSEVLVDVNRVTKVVKGGRRFAFSAYVVVGDKAGRVGAGHGKAKEVNEAREKAKQAAKKKMMKVSLYQNRTIHHDVIGRSGAAKVVLRRAKAGTGVIAGGSMRAIFDSLGVHDIVAKSIGSTNVYTMIAATFDALKKLSSPKSIAARRDKKMNEIFIKSSDIQVNE.

The 64-residue stretch at 11–74 folds into the S5 DRBM domain; that stretch reads LSEVLVDVNR…QAAKKKMMKV (64 aa).

It belongs to the universal ribosomal protein uS5 family. Part of the 30S ribosomal subunit. Contacts proteins S4 and S8.

Its function is as follows. With S4 and S12 plays an important role in translational accuracy. Located at the back of the 30S subunit body where it stabilizes the conformation of the head with respect to the body. This is Small ribosomal subunit protein uS5 from Rickettsia bellii (strain RML369-C).